Here is a 444-residue protein sequence, read N- to C-terminus: Retinoic acid receptor alpha-A (444 aa).

Residues 1–71 form a modulating region; sequence MYESVDVNPF…PPSPPPPPRI (71 aa). A compositionally biased stretch (polar residues) spans 35 to 46; that stretch reads SIRHQHWSGSNH. The disordered stretch occupies residues 35–67; that stretch reads SIRHQHWSGSNHSIETQSTSSEEIVPSPPSPPP. The segment covering 47 to 58 has biased composition (low complexity); it reads SIETQSTSSEEI. The segment at residues 72–147 is a DNA-binding region (nuclear receptor); sequence YKPCFVCQDK…VGMSKESVRN (76 aa). NR C4-type zinc fingers lie at residues 75–95 and 111–130; these read CFVC…CEGC and CHRE…CQYC. Residues 148–169 form a hinge region; the sequence is DRNKKKKEEKKPECTENYTLSP. The NR LBD domain maps to 170-404; that stretch reads DTEQMIDRVR…PLIQEMLENS (235 aa). The 9aaTAD motif lies at 395–403; the sequence is PLIQEMLEN. Residues 402–444 form a disordered region; the sequence is ENSEGLESSSGAQGSRASATTPGSCSPSLSPNSAQSSPPTQSP.

It belongs to the nuclear hormone receptor family. NR1 subfamily. Heterodimer; with an rxr molecule. Binds DNA preferentially as a rar/rxr heterodimer. As to expression, in the embryo, zygotic expression largely overlaps that of rarab, with high levels in hindbrain, lateral mesoderm and tail bud. In the adult, strong expression in brain and muscle, weaker expression in ovary, liver and digestive tract.

The protein localises to the nucleus. Its function is as follows. Receptor for retinoic acid. Retinoic acid receptors bind as heterodimers to their target response elements in response to their ligands, all-trans or 9-cis retinoic acid, and regulate gene expression in various biological processes. The rar/rxr heterodimers bind to the retinoic acid response elements (RARE) composed of tandem 5'-AGGTCA-3' sites known as DR1-DR5. Required for hindbrain patterning. The chain is Retinoic acid receptor alpha-A from Danio rerio (Zebrafish).